The primary structure comprises 43 residues: Potassium channel toxin gamma-KTx 3.3 (43 aa).

Disulfide bonds link Cys5/Cys23, Cys11/Cys34, Cys20/Cys39, and Cys24/Cys41.

It belongs to the ergtoxin family. Gamma-KTx 3 subfamily. Expressed by the venom gland.

It localises to the secreted. Functionally, blocks Kv11/ERG potassium channels. This chain is Potassium channel toxin gamma-KTx 3.3, found in Centruroides sculpturatus (Arizona bark scorpion).